The primary structure comprises 282 residues: Probable transcription factor At1g66420 (282 aa).

Positions 33–73 (SKKNEEFCGGSGKVQPSEMKRRSEGTSTDMTSKRAKKVSAE) are disordered.

It belongs to the GeBP family.

The protein is Probable transcription factor At1g66420 of Arabidopsis thaliana (Mouse-ear cress).